A 172-amino-acid chain; its full sequence is Phosphopantetheine adenylyltransferase (172 aa).

Threonine 14 is a substrate binding site. Residues 14–15 (TF) and histidine 22 contribute to the ATP site. Substrate-binding residues include lysine 46, leucine 78, and arginine 92. Residues 93–95 (GLR), glutamate 103, and 128–134 (WLYISST) each bind ATP.

It belongs to the bacterial CoaD family. As to quaternary structure, homohexamer. It depends on Mg(2+) as a cofactor.

The protein resides in the cytoplasm. It catalyses the reaction (R)-4'-phosphopantetheine + ATP + H(+) = 3'-dephospho-CoA + diphosphate. It functions in the pathway cofactor biosynthesis; coenzyme A biosynthesis; CoA from (R)-pantothenate: step 4/5. Reversibly transfers an adenylyl group from ATP to 4'-phosphopantetheine, yielding dephospho-CoA (dPCoA) and pyrophosphate. The chain is Phosphopantetheine adenylyltransferase from Lawsonia intracellularis (strain PHE/MN1-00).